The chain runs to 667 residues: Protein adenylyltransferase SelO, mitochondrial (667 aa).

The N-terminal 6 residues, 1-6, are a transit peptide targeting the mitochondrion; sequence MASVRA. ATP is bound by residues G154, G156, K177, D189, G190, R247, and R254. D341 functions as the Proton acceptor in the catalytic mechanism. Positions 342 and 351 each coordinate Mg(2+). Residue D351 participates in ATP binding. The segment at 628-652 is disordered; that stretch reads YHSEEEATGPEAVARSTEEQSSYSN. T635 bears the Phosphothreonine mark. At S651 the chain carries Phosphoserine. Residue U665 is a non-standard amino acid, selenocysteine.

Belongs to the SELO family. It depends on Mg(2+) as a cofactor.

Its subcellular location is the mitochondrion. The enzyme catalyses L-tyrosyl-[protein] + ATP = O-(5'-adenylyl)-L-tyrosyl-[protein] + diphosphate. It catalyses the reaction L-threonyl-[protein] + ATP = 3-O-(5'-adenylyl)-L-threonyl-[protein] + diphosphate. The catalysed reaction is L-seryl-[protein] + ATP = 3-O-(5'-adenylyl)-L-seryl-[protein] + diphosphate. Its function is as follows. Catalyzes the transfer of adenosine 5'-monophosphate (AMP) to Ser, Thr and Tyr residues of target proteins (AMPylation). May be a redox-active mitochondrial selenoprotein which interacts with a redox target protein. The polypeptide is Protein adenylyltransferase SelO, mitochondrial (Mus musculus (Mouse)).